The primary structure comprises 656 residues: Protein teflon (656 aa).

The segment at 33 to 56 (LYCHFCRDLFTQLPEFLRHLQSNH) adopts a C2H2-type 1 zinc-finger fold. The segment at 80-131 (DKAHEDAQSAGHNSSSGDSRSLMNSEDSRAIDGSEENSDNSPVKPEQIGKQN) is disordered. Residues 89–104 (AGHNSSSGDSRSLMNS) are compositionally biased toward polar residues. C2H2-type zinc fingers lie at residues 606–628 (YFCK…LISH) and 632–655 (FQCT…RNAH).

Belongs to the Teflon family.

The protein resides in the nucleus. The protein localises to the chromosome. In terms of biological role, specifically required in males for proper segregation of autosomal bivalents at meiosis I. Expression is required in the male germ line prior to spermatocyte stage S4. May have a role as a bridging molecule maintaining adhesion to hold autosome bivalents together via heterochromatic connections. This is Protein teflon from Drosophila sechellia (Fruit fly).